The sequence spans 300 residues: NAD kinase (300 aa).

The Proton acceptor role is filled by Asp-75. Residues 75–76, 149–150, Arg-177, Asp-179, 190–195, Ala-214, and Gln-248 each bind NAD(+); these read DG, ND, and TAYALS.

It belongs to the NAD kinase family. The cofactor is a divalent metal cation.

It is found in the cytoplasm. It catalyses the reaction NAD(+) + ATP = ADP + NADP(+) + H(+). Involved in the regulation of the intracellular balance of NAD and NADP, and is a key enzyme in the biosynthesis of NADP. Catalyzes specifically the phosphorylation on 2'-hydroxyl of the adenosine moiety of NAD to yield NADP. The sequence is that of NAD kinase from Burkholderia cenocepacia (strain ATCC BAA-245 / DSM 16553 / LMG 16656 / NCTC 13227 / J2315 / CF5610) (Burkholderia cepacia (strain J2315)).